Consider the following 154-residue polypeptide: 6,7-dimethyl-8-ribityllumazine synthase (154 aa).

5-amino-6-(D-ribitylamino)uracil-binding positions include Phe22, 56–58 (AFE), and 80–82 (TVI). A (2S)-2-hydroxy-3-oxobutyl phosphate-binding site is contributed by 85 to 86 (AT). His88 acts as the Proton donor in catalysis. Phe113 contributes to the 5-amino-6-(D-ribitylamino)uracil binding site. (2S)-2-hydroxy-3-oxobutyl phosphate is bound at residue Arg127.

The protein belongs to the DMRL synthase family. As to quaternary structure, forms an icosahedral capsid composed of 60 subunits, arranged as a dodecamer of pentamers.

The enzyme catalyses (2S)-2-hydroxy-3-oxobutyl phosphate + 5-amino-6-(D-ribitylamino)uracil = 6,7-dimethyl-8-(1-D-ribityl)lumazine + phosphate + 2 H2O + H(+). It participates in cofactor biosynthesis; riboflavin biosynthesis; riboflavin from 2-hydroxy-3-oxobutyl phosphate and 5-amino-6-(D-ribitylamino)uracil: step 1/2. Functionally, catalyzes the formation of 6,7-dimethyl-8-ribityllumazine by condensation of 5-amino-6-(D-ribitylamino)uracil with 3,4-dihydroxy-2-butanone 4-phosphate. This is the penultimate step in the biosynthesis of riboflavin. This chain is 6,7-dimethyl-8-ribityllumazine synthase, found in Bacillus licheniformis (strain ATCC 14580 / DSM 13 / JCM 2505 / CCUG 7422 / NBRC 12200 / NCIMB 9375 / NCTC 10341 / NRRL NRS-1264 / Gibson 46).